The chain runs to 777 residues: DnaJ homolog subfamily C member 16 (777 aa).

An N-terminal signal peptide occupies residues 1 to 23; the sequence is MELGRAGPAGLLLLLLLLLAAQA. Over 24 to 531 the chain is Cytoplasmic; it reads APERDPYRVL…DSLFHSNWRE (508 aa). The J domain maps to 28–92; sequence DPYRVLGVGR…EKRANFDRYG (65 aa). Residues 117–243 enclose the Thioredoxin domain; it reads FDESFFHFPF…LRQFVENLLP (127 aa). A helical; Anchor for type IV membrane protein transmembrane segment spans residues 532-552; that stretch reads MMPLLSLLFSALFILFGTVIV. The Extracellular segment spans residues 553-777; that stretch reads QAFSDSSDTR…FYIPSWPALD (225 aa). The disordered stretch occupies residues 558 to 589; it reads SSDTRDSPASEKKDTTAKTEKNDTSFNKESNS. The segment covering 559–580 has biased composition (basic and acidic residues); sequence SDTRDSPASEKKDTTAKTEKND. A glycan (N-linked (GlcNAc...) asparagine) is linked at asparagine 627.

Its subcellular location is the endoplasmic reticulum membrane. In terms of biological role, plays an important role in regulating the size of autophagosomes during the formation process. In Gallus gallus (Chicken), this protein is DnaJ homolog subfamily C member 16 (DNAJC16).